A 98-amino-acid polypeptide reads, in one-letter code: Aspartyl/glutamyl-tRNA(Asn/Gln) amidotransferase subunit C (98 aa).

This sequence belongs to the GatC family. In terms of assembly, heterotrimer of A, B and C subunits.

It catalyses the reaction L-glutamyl-tRNA(Gln) + L-glutamine + ATP + H2O = L-glutaminyl-tRNA(Gln) + L-glutamate + ADP + phosphate + H(+). The enzyme catalyses L-aspartyl-tRNA(Asn) + L-glutamine + ATP + H2O = L-asparaginyl-tRNA(Asn) + L-glutamate + ADP + phosphate + 2 H(+). Allows the formation of correctly charged Asn-tRNA(Asn) or Gln-tRNA(Gln) through the transamidation of misacylated Asp-tRNA(Asn) or Glu-tRNA(Gln) in organisms which lack either or both of asparaginyl-tRNA or glutaminyl-tRNA synthetases. The reaction takes place in the presence of glutamine and ATP through an activated phospho-Asp-tRNA(Asn) or phospho-Glu-tRNA(Gln). The polypeptide is Aspartyl/glutamyl-tRNA(Asn/Gln) amidotransferase subunit C (Arthrobacter sp. (strain FB24)).